A 295-amino-acid polypeptide reads, in one-letter code: sn-glycerol-3-phosphate transport system permease protein UgpA (295 aa).

Over 1 to 11 the chain is Cytoplasmic; the sequence is MSSSRPVFRSR. A helical membrane pass occupies residues 12–32; that stretch reads WLPYLLVAPQLVITVIFFIWP. The Periplasmic segment spans residues 33 to 80; the sequence is AGEALWYSLQSVDPFGFSSQFVGLENFVALFHDSYYLDAFWTTIKFSA. One can recognise an ABC transmembrane type-1 domain in the interval 76–284; sequence IKFSALVTFS…FLVIILTVVQ (209 aa). A helical membrane pass occupies residues 81-101; that stretch reads LVTFSGLLVSLFFAALVDYVV. Topologically, residues 102–109 are cytoplasmic; it reads RGSRFYQT. Residues 110 to 130 traverse the membrane as a helical segment; that stretch reads LMLLPYAVAPAVAAVLWIFLF. The Periplasmic segment spans residues 131-157; that stretch reads NPGRGLITHFLGEFGYDWNHAQNSGQA. The chain crosses the membrane as a helical span at residues 158 to 178; that stretch reads MFLVVFASVWKQISYNFLFFF. At 179-207 the chain is on the cytoplasmic side; sequence AALQSIPRSLVEAAAIDGAGPIRRFFRLS. The chain crosses the membrane as a helical span at residues 208 to 228; it reads LPLIAPVSFFLLVVNLVYAFF. The Periplasmic segment spans residues 229–262; that stretch reads DTFPVIDAATAGGPVQATTTLIYKIYCEGFTGLD. Residues 263–283 form a helical membrane-spanning segment; that stretch reads LSASAAQSVVLMFLVIILTVV. Residues 284-295 are Cytoplasmic-facing; sequence QFRYVESKVRYQ.

It belongs to the binding-protein-dependent transport system permease family. UgpAE subfamily. In terms of assembly, the complex is composed of two ATP-binding proteins (UgpC), two transmembrane proteins (UgpA and UgpE) and a solute-binding protein (UgpB).

It localises to the cell inner membrane. In terms of biological role, part of the ABC transporter complex UgpBAEC involved in sn-glycerol-3-phosphate (G3P) import. Probably responsible for the translocation of the substrate across the membrane. This chain is sn-glycerol-3-phosphate transport system permease protein UgpA (ugpA), found in Salmonella typhi.